The primary structure comprises 245 residues: 1-(5-phosphoribosyl)-5-[(5-phosphoribosylamino)methylideneamino] imidazole-4-carboxamide isomerase (245 aa).

Aspartate 11 serves as the catalytic Proton acceptor. Aspartate 132 (proton donor) is an active-site residue.

It belongs to the HisA/HisF family.

It is found in the cytoplasm. The catalysed reaction is 1-(5-phospho-beta-D-ribosyl)-5-[(5-phospho-beta-D-ribosylamino)methylideneamino]imidazole-4-carboxamide = 5-[(5-phospho-1-deoxy-D-ribulos-1-ylimino)methylamino]-1-(5-phospho-beta-D-ribosyl)imidazole-4-carboxamide. Its pathway is amino-acid biosynthesis; L-histidine biosynthesis; L-histidine from 5-phospho-alpha-D-ribose 1-diphosphate: step 4/9. This Geobacillus kaustophilus (strain HTA426) protein is 1-(5-phosphoribosyl)-5-[(5-phosphoribosylamino)methylideneamino] imidazole-4-carboxamide isomerase.